The following is a 51-amino-acid chain: Large ribosomal subunit protein eL40 (51 aa).

Belongs to the eukaryotic ribosomal protein eL40 family.

The sequence is that of Large ribosomal subunit protein eL40 from Thermofilum pendens (strain DSM 2475 / Hrk 5).